The sequence spans 458 residues: Ammonium transporter Rh type B (458 aa).

Over 1 to 13 the chain is Cytoplasmic; sequence MAGSPSRAAGRRL. Residues 14-34 form a helical membrane-spanning segment; sequence QLPLLCLFLQGATAVLFAVFV. At 35–61 the chain is on the extracellular side; it reads RYNHKTDAALWHRSNHSNADNEFYFRY. A glycan (N-linked (GlcNAc...) asparagine) is linked at N49. The helical transmembrane segment at 62-82 threads the bilayer; the sequence is PSFQDVHAMVFVGFGFLMVFL. The Cytoplasmic portion of the chain corresponds to 83-86; sequence QRYG. A helical transmembrane segment spans residues 87-107; that stretch reads FSSVGFTFLLAAFALQWSTLV. Residues 108-124 lie on the Extracellular side of the membrane; it reads QGFLHSFHGGHIHVGVE. The helical transmembrane segment at 125-145 threads the bilayer; sequence SMINADFCAGAVLISFGAVLG. Residues 146–149 are Cytoplasmic-facing; it reads KTGP. The helical transmembrane segment at 150-170 threads the bilayer; it reads AQLLLMALLEVVLFGINEFVL. The Extracellular portion of the chain corresponds to 171-178; it reads LHLLGVRD. A helical membrane pass occupies residues 179-201; sequence AGGSMTIHTFGAYFGLVLSRVLY. Over 202 to 219 the chain is Cytoplasmic; it reads RPQLEKSKHRQGSVYHSD. A helical membrane pass occupies residues 220–240; it reads LFAMIGTIFLWIFWPSFNAAL. Over 241-251 the chain is Extracellular; that stretch reads TALGAGQHRTA. A helical membrane pass occupies residues 252–272; sequence LNTYYSLAASTLGTFALSALV. At 273-282 the chain is on the cytoplasmic side; sequence GEDGRLDMVH. A helical membrane pass occupies residues 283-303; that stretch reads IQNAALAGGVVVGTSSEMMLT. Position 304 (P304) is a topological domain, extracellular. Residues 305-325 form a helical membrane-spanning segment; the sequence is FGALTAGFLAGTVSTLGYKFF. The Cytoplasmic portion of the chain corresponds to 326 to 346; sequence RPILESKFKVQDTCGVHNLHG. The chain crosses the membrane as a helical span at residues 347 to 367; that stretch reads MPGVLGALLGVLVAGLATHEA. The Extracellular segment spans residues 368–393; that stretch reads YGDGLESVFPLIAEGQRSATSQAMHQ. The chain crosses the membrane as a helical span at residues 394 to 414; it reads LFGLFVTLMFASVGGGLGGLL. Residues 415 to 458 lie on the Cytoplasmic side of the membrane; that stretch reads LKLPFLDSPPDSQCYEDQVHWQVPGEHEDKAQRPLRVEEADTQA. An interaction with ANK3 region spans residues 416–424; that stretch reads KLPFLDSPP. Residues 429–432 carry the Basolateral sorting signal motif; sequence YEDQ. Positions 439-458 are disordered; sequence GEHEDKAQRPLRVEEADTQA.

This sequence belongs to the ammonium transporter (TC 2.A.49) family. Rh subfamily. Interacts (via C-terminus) with ANK2 and ANK3; required for targeting to the basolateral membrane. Post-translationally, N-glycosylated.

It localises to the cell membrane. It is found in the basolateral cell membrane. It carries out the reaction NH4(+)(in) = NH4(+)(out). The enzyme catalyses methylamine(out) = methylamine(in). The catalysed reaction is CO2(out) = CO2(in). Functionally, ammonium transporter involved in the maintenance of acid-base homeostasis. Transports ammonium and its related derivative methylammonium across the basolateral plasma membrane of epithelial cells likely contributing to renal transepithelial ammonia transport and ammonia metabolism. May transport either NH4(+) or NH3 ammonia species predominantly mediating an electrogenic NH4(+) transport. May act as a CO2 channel providing for renal acid secretion. In Pan troglodytes (Chimpanzee), this protein is Ammonium transporter Rh type B (RHBG).